The sequence spans 133 residues: Ribosomal RNA large subunit methyltransferase H 1 (133 aa).

S-adenosyl-L-methionine contacts are provided by residues isoleucine 55, glycine 89, and 101–106 (ISPMEM).

This sequence belongs to the RNA methyltransferase RlmH family. In terms of assembly, homodimer.

The protein localises to the cytoplasm. It catalyses the reaction pseudouridine(1915) in 23S rRNA + S-adenosyl-L-methionine = N(3)-methylpseudouridine(1915) in 23S rRNA + S-adenosyl-L-homocysteine + H(+). Functionally, specifically methylates the pseudouridine at position 1915 (m3Psi1915) in 23S rRNA. This chain is Ribosomal RNA large subunit methyltransferase H 1, found in Thermoanaerobacter sp. (strain X514).